A 518-amino-acid chain; its full sequence is Gypsy retrotransposon integrase-like protein 1 (518 aa).

An Integrase catalytic domain is found at 130–292 (QQHLPMVGNP…TPYFQMFNRN (163 aa)). Ser498 carries the phosphoserine modification.

In Mus musculus (Mouse), this protein is Gypsy retrotransposon integrase-like protein 1 (Gin1).